Here is an 850-residue protein sequence, read N- to C-terminus: Mitochondrial escape protein 2 (850 aa).

The transit peptide at 1–44 (MLLVRTTSLNVSRMPVPCLARGIGILKGKYRLANLMNAQPSVRH) directs the protein to the mitochondrion. The tract at residues 44–66 (HVSSEIQQKDQQAGESNTATDTG) is disordered. The Mitochondrial matrix segment spans residues 45-287 (VSSEIQQKDQ…VSNFFTNHTR (243 aa)). A compositionally biased stretch (polar residues) spans 47–64 (SEIQQKDQQAGESNTATD). Positions 198–272 (TTIVIKFQGP…TVLHIQYENI (75 aa)) constitute an RRM domain. A helical membrane pass occupies residues 288 to 308 (IAIPVLFALLSIFAVLVFDPI). Topologically, residues 309 to 850 (REFSIEQKIT…CEEEIKNLSK (542 aa)) are mitochondrial intermembrane. The segment covering 607–621 (KGENVKEPESEKEIA) has biased composition (basic and acidic residues). Residues 607 to 633 (KGENVKEPESEKEIAENNDSDSEADTS) are disordered.

It belongs to the YME2 family.

It localises to the mitochondrion inner membrane. In terms of biological role, plays a role in maintaining the mitochondrial genome and in controlling the mtDNA escape. Involved in the regulation of mtDNA nucleotide structure and number. May have a dispensable role in early maturation of pre-rRNA. In Saccharomyces cerevisiae (strain YJM789) (Baker's yeast), this protein is Mitochondrial escape protein 2 (YME2).